Reading from the N-terminus, the 273-residue chain is Orotidine 5'-phosphate decarboxylase (273 aa).

The active-site Proton donor is the Lys-96.

This sequence belongs to the OMP decarboxylase family. Type 2 subfamily.

The catalysed reaction is orotidine 5'-phosphate + H(+) = UMP + CO2. It functions in the pathway pyrimidine metabolism; UMP biosynthesis via de novo pathway; UMP from orotate: step 2/2. In Flavobacterium johnsoniae (strain ATCC 17061 / DSM 2064 / JCM 8514 / BCRC 14874 / CCUG 350202 / NBRC 14942 / NCIMB 11054 / UW101) (Cytophaga johnsonae), this protein is Orotidine 5'-phosphate decarboxylase.